Here is a 160-residue protein sequence, read N- to C-terminus: Protein-export protein SecB (160 aa).

The protein belongs to the SecB family. In terms of assembly, homotetramer, a dimer of dimers. One homotetramer interacts with 1 SecA dimer.

It localises to the cytoplasm. One of the proteins required for the normal export of preproteins out of the cell cytoplasm. It is a molecular chaperone that binds to a subset of precursor proteins, maintaining them in a translocation-competent state. It also specifically binds to its receptor SecA. The sequence is that of Protein-export protein SecB from Agrobacterium fabrum (strain C58 / ATCC 33970) (Agrobacterium tumefaciens (strain C58)).